We begin with the raw amino-acid sequence, 303 residues long: tRNA pseudouridine synthase-like 1 (303 aa).

Residue Asp-66 is the Nucleophile of the active site. The residue at position 84 (Ser-84) is a Phosphoserine. A substrate-binding site is contributed by Tyr-130.

This sequence belongs to the tRNA pseudouridine synthase TruA family.

It catalyses the reaction a uridine in tRNA = a pseudouridine in tRNA. The chain is tRNA pseudouridine synthase-like 1 (PUSL1) from Homo sapiens (Human).